Consider the following 68-residue polypeptide: Large ribosomal subunit protein uL29 (68 aa).

The protein belongs to the universal ribosomal protein uL29 family.

This is Large ribosomal subunit protein uL29 from Albidiferax ferrireducens (strain ATCC BAA-621 / DSM 15236 / T118) (Rhodoferax ferrireducens).